A 235-amino-acid chain; its full sequence is Hydroxyacylglutathione hydrolase (235 aa).

Histidine 53, histidine 55, aspartate 57, histidine 58, histidine 109, aspartate 127, and histidine 165 together coordinate Zn(2+).

The protein belongs to the metallo-beta-lactamase superfamily. Glyoxalase II family. In terms of assembly, monomer. Requires Zn(2+) as cofactor.

It catalyses the reaction an S-(2-hydroxyacyl)glutathione + H2O = a 2-hydroxy carboxylate + glutathione + H(+). Its pathway is secondary metabolite metabolism; methylglyoxal degradation; (R)-lactate from methylglyoxal: step 2/2. Thiolesterase that catalyzes the hydrolysis of S-D-lactoyl-glutathione to form glutathione and D-lactic acid. The chain is Hydroxyacylglutathione hydrolase from Actinobacillus pleuropneumoniae serotype 5b (strain L20).